We begin with the raw amino-acid sequence, 372 residues long: Glutamate 5-kinase (372 aa).

Residue Lys14 coordinates ATP. Substrate contacts are provided by Ser54, Asp141, and Asn153. Residue 173-174 participates in ATP binding; sequence TD. The PUA domain maps to 280-358; sequence RGHVVIDAGA…GEIESVLGYM (79 aa).

It belongs to the glutamate 5-kinase family.

The protein localises to the cytoplasm. The catalysed reaction is L-glutamate + ATP = L-glutamyl 5-phosphate + ADP. The protein operates within amino-acid biosynthesis; L-proline biosynthesis; L-glutamate 5-semialdehyde from L-glutamate: step 1/2. Functionally, catalyzes the transfer of a phosphate group to glutamate to form L-glutamate 5-phosphate. The protein is Glutamate 5-kinase of Burkholderia multivorans (strain ATCC 17616 / 249).